We begin with the raw amino-acid sequence, 146 residues long: NADH-quinone oxidoreductase subunit A (146 aa).

3 consecutive transmembrane segments (helical) span residues 14 to 34 (FGLF…GGFL), 68 to 88 (LVAM…AWAV), and 96 to 116 (IGFI…IYLV).

This sequence belongs to the complex I subunit 3 family. As to quaternary structure, NDH-1 is composed of 13 different subunits. Subunits NuoA, H, J, K, L, M, N constitute the membrane sector of the complex.

It localises to the cell inner membrane. It catalyses the reaction a quinone + NADH + 5 H(+)(in) = a quinol + NAD(+) + 4 H(+)(out). NDH-1 shuttles electrons from NADH, via FMN and iron-sulfur (Fe-S) centers, to quinones in the respiratory chain. The immediate electron acceptor for the enzyme in this species is believed to be ubiquinone. Couples the redox reaction to proton translocation (for every two electrons transferred, four hydrogen ions are translocated across the cytoplasmic membrane), and thus conserves the redox energy in a proton gradient. The polypeptide is NADH-quinone oxidoreductase subunit A (Pectobacterium carotovorum subsp. carotovorum (Erwinia carotovora subsp. carotovora)).